Reading from the N-terminus, the 443-residue chain is UPF0656 protein C926.02 (443 aa).

This sequence belongs to the UPF0656 family.

The protein localises to the cytoplasm. It localises to the nucleus. This chain is UPF0656 protein C926.02, found in Schizosaccharomyces pombe (strain 972 / ATCC 24843) (Fission yeast).